The sequence spans 392 residues: Carbamoyl phosphate synthase small chain (392 aa).

The CPSase stretch occupies residues 1–174; sequence MSKKALLALE…EVIVENPEGD (174 aa). L-glutamine is bound by residues Ser-47, Gly-224, and Gly-226. The Glutamine amidotransferase type-1 domain occupies 176–392; the sequence is SVVVLDSGVK…EFKRLIKEVR (217 aa). Residue Cys-252 is the Nucleophile of the active site. Residues Leu-253, Gln-256, Asn-294, Gly-296, and Phe-297 each coordinate L-glutamine. Residues His-367 and Glu-369 contribute to the active site.

Belongs to the CarA family. As to quaternary structure, composed of two chains; the small (or glutamine) chain promotes the hydrolysis of glutamine to ammonia, which is used by the large (or ammonia) chain to synthesize carbamoyl phosphate. Tetramer of heterodimers (alpha,beta)4.

The enzyme catalyses hydrogencarbonate + L-glutamine + 2 ATP + H2O = carbamoyl phosphate + L-glutamate + 2 ADP + phosphate + 2 H(+). The catalysed reaction is L-glutamine + H2O = L-glutamate + NH4(+). The protein operates within amino-acid biosynthesis; L-arginine biosynthesis; carbamoyl phosphate from bicarbonate: step 1/1. Its pathway is pyrimidine metabolism; UMP biosynthesis via de novo pathway; (S)-dihydroorotate from bicarbonate: step 1/3. Small subunit of the glutamine-dependent carbamoyl phosphate synthetase (CPSase). CPSase catalyzes the formation of carbamoyl phosphate from the ammonia moiety of glutamine, carbonate, and phosphate donated by ATP, constituting the first step of 2 biosynthetic pathways, one leading to arginine and/or urea and the other to pyrimidine nucleotides. The small subunit (glutamine amidotransferase) binds and cleaves glutamine to supply the large subunit with the substrate ammonia. This is Carbamoyl phosphate synthase small chain from Thermotoga maritima (strain ATCC 43589 / DSM 3109 / JCM 10099 / NBRC 100826 / MSB8).